Here is a 413-residue protein sequence, read N- to C-terminus: MAKTKEHINLAFIGHVDHGKSTLVGHLLLKAGAIAEQQLDDGENKFRFVMDKLGEERERGVTIDLAHQKFSTKKYDYTVVDCPGHRDFVKNMITGASQADAGVLVVAADDGVMPQTKEHVFLSKTLGINQLIVAINKIDLVDYDEAKFNELKDEVSALIKTVGFNPADVPFIPVSAFEGDNIKDASPNTSWYKGDTLMQALDNLAAPEKPVSLPLRIPIQDVYSITGVGTVPVGRVETGVMKKGENVIFEPAGASGEVKSIEMHHETFETAEPGDNIGFNVRGVGKNDIRRGDVAGHVDDAPAVAKEFDAQIVVLQHPGVITVGYTPVFHCHTSQVACTFLELTAKLDPATGQVAEENPDFLKTGNAAFVKVKPTKPMVIENAKKIPQMGRFAIRDMGQTVAAGLCIDVTPAK.

Positions 5–211 (KEHINLAFIG…DNLAAPEKPV (207 aa)) constitute a tr-type G domain. Residues 14–21 (GHVDHGKS) are G1. 14–21 (GHVDHGKS) serves as a coordination point for GTP. Residue S21 participates in Mg(2+) binding. The interval 60-64 (GVTID) is G2. The G3 stretch occupies residues 81–84 (DCPG). GTP is bound by residues 81-85 (DCPGH) and 136-139 (NKID). The tract at residues 136-139 (NKID) is G4. The tract at residues 175-177 (SAF) is G5.

This sequence belongs to the TRAFAC class translation factor GTPase superfamily. Classic translation factor GTPase family. EF-Tu/EF-1A subfamily.

Its subcellular location is the cytoplasm. It catalyses the reaction GTP + H2O = GDP + phosphate + H(+). GTP hydrolase that promotes the GTP-dependent binding of aminoacyl-tRNA to the A-site of ribosomes during protein biosynthesis. This chain is Elongation factor 1-alpha, found in Methanobrevibacter smithii (strain ATCC 35061 / DSM 861 / OCM 144 / PS).